Consider the following 127-residue polypeptide: ATP synthase epsilon chain (127 aa).

The protein belongs to the ATPase epsilon chain family. As to quaternary structure, F-type ATPases have 2 components, CF(1) - the catalytic core - and CF(0) - the membrane proton channel. CF(1) has five subunits: alpha(3), beta(3), gamma(1), delta(1), epsilon(1). CF(0) has three main subunits: a, b and c.

The protein resides in the cell inner membrane. Its function is as follows. Produces ATP from ADP in the presence of a proton gradient across the membrane. This is ATP synthase epsilon chain from Leptospira borgpetersenii serovar Hardjo-bovis (strain JB197).